A 242-amino-acid chain; its full sequence is Ribose-5-phosphate isomerase A (242 aa).

Substrate is bound by residues 39-42, 95-98, and 108-111; these read SGST, DGAD, and KGGG. Residue glutamate 117 is the Proton acceptor of the active site. Residue lysine 135 participates in substrate binding.

It belongs to the ribose 5-phosphate isomerase family. In terms of assembly, homodimer.

The catalysed reaction is aldehydo-D-ribose 5-phosphate = D-ribulose 5-phosphate. The protein operates within carbohydrate degradation; pentose phosphate pathway; D-ribose 5-phosphate from D-ribulose 5-phosphate (non-oxidative stage): step 1/1. Its function is as follows. Catalyzes the reversible conversion of ribose-5-phosphate to ribulose 5-phosphate. The chain is Ribose-5-phosphate isomerase A from Chlamydia trachomatis serovar L2 (strain ATCC VR-902B / DSM 19102 / 434/Bu).